The chain runs to 375 residues: tRNA-specific 2-thiouridylase MnmA (375 aa).

Residues 12 to 19 and methionine 38 each bind ATP; that span reads GMSGGVDS. Residues 98-100 are interaction with target base in tRNA; sequence NPD. Cysteine 103 acts as the Nucleophile in catalysis. An intrachain disulfide couples cysteine 103 to cysteine 200. Glycine 127 contributes to the ATP binding site. The segment at 150 to 152 is interaction with tRNA; that stretch reads KDQ. The active-site Cysteine persulfide intermediate is cysteine 200. Residues 312–313 form an interaction with tRNA region; it reads RY.

This sequence belongs to the MnmA/TRMU family.

It localises to the cytoplasm. The enzyme catalyses S-sulfanyl-L-cysteinyl-[protein] + uridine(34) in tRNA + AH2 + ATP = 2-thiouridine(34) in tRNA + L-cysteinyl-[protein] + A + AMP + diphosphate + H(+). Its function is as follows. Catalyzes the 2-thiolation of uridine at the wobble position (U34) of tRNA, leading to the formation of s(2)U34. This Lactobacillus johnsonii (strain CNCM I-12250 / La1 / NCC 533) protein is tRNA-specific 2-thiouridylase MnmA.